Here is a 1033-residue protein sequence, read N- to C-terminus: Isoleucine--tRNA ligase (1033 aa).

Residues 47-57 carry the 'HIGH' region motif; it reads PTANGLPHVGH. Positions 590-594 match the 'KMSKS' region motif; sequence KMSKS. Lys593 is a binding site for ATP.

The protein belongs to the class-I aminoacyl-tRNA synthetase family. IleS type 2 subfamily. Monomer. Requires Zn(2+) as cofactor.

It localises to the cytoplasm. The enzyme catalyses tRNA(Ile) + L-isoleucine + ATP = L-isoleucyl-tRNA(Ile) + AMP + diphosphate. Its function is as follows. Catalyzes the attachment of isoleucine to tRNA(Ile). As IleRS can inadvertently accommodate and process structurally similar amino acids such as valine, to avoid such errors it has two additional distinct tRNA(Ile)-dependent editing activities. One activity is designated as 'pretransfer' editing and involves the hydrolysis of activated Val-AMP. The other activity is designated 'posttransfer' editing and involves deacylation of mischarged Val-tRNA(Ile). The polypeptide is Isoleucine--tRNA ligase (Bacillus thuringiensis (strain Al Hakam)).